The sequence spans 313 residues: tRNA dimethylallyltransferase 2 (313 aa).

Position 16 to 23 (16 to 23 (GPTASGKT)) interacts with ATP. 18-23 (TASGKT) contacts substrate. Interaction with substrate tRNA stretches follow at residues 41–44 (DSRQ) and 161–165 (QRTIR).

It belongs to the IPP transferase family. Monomer. The cofactor is Mg(2+).

The enzyme catalyses adenosine(37) in tRNA + dimethylallyl diphosphate = N(6)-dimethylallyladenosine(37) in tRNA + diphosphate. Catalyzes the transfer of a dimethylallyl group onto the adenine at position 37 in tRNAs that read codons beginning with uridine, leading to the formation of N6-(dimethylallyl)adenosine (i(6)A). The polypeptide is tRNA dimethylallyltransferase 2 (Pelobacter propionicus (strain DSM 2379 / NBRC 103807 / OttBd1)).